The primary structure comprises 190 residues: Elongation factor P-like protein (190 aa).

The protein belongs to the elongation factor P family.

The sequence is that of Elongation factor P-like protein from Yersinia pestis bv. Antiqua (strain Antiqua).